The sequence spans 617 residues: DNA mismatch repair protein MutL (617 aa).

This sequence belongs to the DNA mismatch repair MutL/HexB family.

Its function is as follows. This protein is involved in the repair of mismatches in DNA. It is required for dam-dependent methyl-directed DNA mismatch repair. May act as a 'molecular matchmaker', a protein that promotes the formation of a stable complex between two or more DNA-binding proteins in an ATP-dependent manner without itself being part of a final effector complex. The protein is DNA mismatch repair protein MutL of Bartonella tribocorum (strain CIP 105476 / IBS 506).